The sequence spans 99 residues: Small ribosomal subunit protein bS20 (99 aa).

This sequence belongs to the bacterial ribosomal protein bS20 family.

Binds directly to 16S ribosomal RNA. This is Small ribosomal subunit protein bS20 from Chlamydia pneumoniae (Chlamydophila pneumoniae).